The primary structure comprises 309 residues: UDP-N-acetylenolpyruvoylglucosamine reductase (309 aa).

Positions 40–204 (LGGKVPLFAI…LQATFKLKKG (165 aa)) constitute an FAD-binding PCMH-type domain. R182 is an active-site residue. S233 serves as the catalytic Proton donor. Residue E304 is part of the active site.

The protein belongs to the MurB family. FAD is required as a cofactor.

The protein localises to the cytoplasm. The catalysed reaction is UDP-N-acetyl-alpha-D-muramate + NADP(+) = UDP-N-acetyl-3-O-(1-carboxyvinyl)-alpha-D-glucosamine + NADPH + H(+). It functions in the pathway cell wall biogenesis; peptidoglycan biosynthesis. Its function is as follows. Cell wall formation. The sequence is that of UDP-N-acetylenolpyruvoylglucosamine reductase from Fervidobacterium nodosum (strain ATCC 35602 / DSM 5306 / Rt17-B1).